Consider the following 198-residue polypeptide: NADH-quinone oxidoreductase subunit B (198 aa).

Residues 1-20 (MGLNPTQVSTSGSPQVSQPA) are compositionally biased toward polar residues. Residues 1–29 (MGLNPTQVSTSGSPQVSQPATGVLDPRTG) are disordered. [4Fe-4S] cluster contacts are provided by cysteine 77, cysteine 78, cysteine 142, and cysteine 172.

Belongs to the complex I 20 kDa subunit family. As to quaternary structure, NDH-1 is composed of 14 different subunits. Subunits NuoB, C, D, E, F, and G constitute the peripheral sector of the complex. [4Fe-4S] cluster serves as cofactor.

It localises to the cell inner membrane. It catalyses the reaction a quinone + NADH + 5 H(+)(in) = a quinol + NAD(+) + 4 H(+)(out). Functionally, NDH-1 shuttles electrons from NADH, via FMN and iron-sulfur (Fe-S) centers, to quinones in the respiratory chain. The immediate electron acceptor for the enzyme in this species is believed to be ubiquinone. Couples the redox reaction to proton translocation (for every two electrons transferred, four hydrogen ions are translocated across the cytoplasmic membrane), and thus conserves the redox energy in a proton gradient. The polypeptide is NADH-quinone oxidoreductase subunit B (Afipia carboxidovorans (strain ATCC 49405 / DSM 1227 / KCTC 32145 / OM5) (Oligotropha carboxidovorans)).